The sequence spans 171 residues: Crossover junction endodeoxyribonuclease RuvC (171 aa).

Active-site residues include Asp7, Glu66, and Asp138. Mg(2+)-binding residues include Asp7, Glu66, and Asp138.

It belongs to the RuvC family. As to quaternary structure, homodimer which binds Holliday junction (HJ) DNA. The HJ becomes 2-fold symmetrical on binding to RuvC with unstacked arms; it has a different conformation from HJ DNA in complex with RuvA. In the full resolvosome a probable DNA-RuvA(4)-RuvB(12)-RuvC(2) complex forms which resolves the HJ. Mg(2+) serves as cofactor.

The protein resides in the cytoplasm. The catalysed reaction is Endonucleolytic cleavage at a junction such as a reciprocal single-stranded crossover between two homologous DNA duplexes (Holliday junction).. Functionally, the RuvA-RuvB-RuvC complex processes Holliday junction (HJ) DNA during genetic recombination and DNA repair. Endonuclease that resolves HJ intermediates. Cleaves cruciform DNA by making single-stranded nicks across the HJ at symmetrical positions within the homologous arms, yielding a 5'-phosphate and a 3'-hydroxyl group; requires a central core of homology in the junction. The consensus cleavage sequence is 5'-(A/T)TT(C/G)-3'. Cleavage occurs on the 3'-side of the TT dinucleotide at the point of strand exchange. HJ branch migration catalyzed by RuvA-RuvB allows RuvC to scan DNA until it finds its consensus sequence, where it cleaves and resolves the cruciform DNA. This chain is Crossover junction endodeoxyribonuclease RuvC, found in Francisella philomiragia subsp. philomiragia (strain ATCC 25017 / CCUG 19701 / FSC 153 / O#319-036).